A 631-amino-acid chain; its full sequence is Vacuolar-sorting receptor 6 (631 aa).

Positions 1–25 are cleaved as a signal peptide; that stretch reads MSLIHKGATLALFLALTMVVNGVFG. Over 26–563 the chain is Lumenal; it reads RFIVEKSSVT…CIERSGSRIG (538 aa). Residues 57–165 form the PA domain; the sequence is NYGGYMIGSV…SFANTLKQAL (109 aa). N-linked (GlcNAc...) asparagine glycans are attached at residues Asn294 and Asn431. EGF-like domains follow at residues 413–463 and 494–540; these read ETNE…TSCE and ETSG…FECK. 5 cysteine pairs are disulfide-bonded: Cys417/Cys435, Cys424/Cys444, Cys446/Cys462, Cys498/Cys511, and Cys530/Cys539. A helical membrane pass occupies residues 564 to 584; the sequence is WFPTFVILAAVASICVGGYVF. At 585–631 the chain is on the cytoplasmic side; sequence YKYRLRSYMDSEIMAIMSQYMPLESQNTTDPMTGESQHQQLRLTSAA. The short motif at 604–607 is the Tyrosine-based internalization motif element; the sequence is YMPL. A disordered region spans residues 610–631; the sequence is QNTTDPMTGESQHQQLRLTSAA.

It belongs to the VSR (BP-80) family. In terms of tissue distribution, expressed in seedlings, roots, leaves, flowers and siliques.

The protein localises to the membrane. It is found in the golgi apparatus membrane. The protein resides in the cytoplasmic vesicle. Its subcellular location is the clathrin-coated vesicle membrane. It localises to the prevacuolar compartment membrane. Functionally, vacuolar-sorting receptor (VSR) involved in clathrin-coated vesicles sorting from Golgi apparatus to vacuoles. The protein is Vacuolar-sorting receptor 6 (VSR6) of Arabidopsis thaliana (Mouse-ear cress).